The primary structure comprises 465 residues: Lactaldehyde dehydrogenase (465 aa).

220–225 (GSVEVG) contacts NAD(+). Catalysis depends on residues E240 and C274.

The protein belongs to the aldehyde dehydrogenase family. Homotetramer.

The catalysed reaction is (S)-lactaldehyde + NAD(+) + H2O = (S)-lactate + NADH + 2 H(+). It functions in the pathway cofactor biosynthesis; coenzyme F420 biosynthesis. Its function is as follows. Involved in F420 biosynthesis through the oxidation of lactaldehyde to lactate. This Methanococcus maripaludis (strain C5 / ATCC BAA-1333) protein is Lactaldehyde dehydrogenase.